The primary structure comprises 355 residues: NADH dehydrogenase [ubiquinone] 1 alpha subcomplex subunit 10, mitochondrial (355 aa).

The N-terminal 35 residues, 1–35 (MALRLLKLAATSASARVVAAGAQRVRGIHSSVQCK), are a transit peptide targeting the mitochondrion. Serine 250 is modified (phosphoserine; by PINK1). Lysine 285 bears the N6-succinyllysine mark.

Belongs to the complex I NDUFA10 subunit family. Complex I is composed of 45 different subunits. This a component of the hydrophobic protein fraction. FAD serves as cofactor. In terms of processing, phosphorylation at Ser-250 by PINK1 is required for the binding and/or reduction of the complex I substrate ubiquinone.

It is found in the mitochondrion matrix. Its function is as follows. Accessory subunit of the mitochondrial membrane respiratory chain NADH dehydrogenase (Complex I), that is believed not to be involved in catalysis. Complex I functions in the transfer of electrons from NADH to the respiratory chain. The immediate electron acceptor for the enzyme is believed to be ubiquinone. The protein is NADH dehydrogenase [ubiquinone] 1 alpha subcomplex subunit 10, mitochondrial (NDUFA10) of Homo sapiens (Human).